Reading from the N-terminus, the 546-residue chain is Chaperonin GroEL 1 (546 aa).

Residues 30 to 33, Lys51, 87 to 91, Gly415, 479 to 481, and Asp495 contribute to the ATP site; these read TLGP, DGTTT, and NAA.

It belongs to the chaperonin (HSP60) family. In terms of assembly, forms a cylinder of 14 subunits composed of two heptameric rings stacked back-to-back. Interacts with the co-chaperonin GroES.

The protein resides in the cytoplasm. The catalysed reaction is ATP + H2O + a folded polypeptide = ADP + phosphate + an unfolded polypeptide.. Functionally, together with its co-chaperonin GroES, plays an essential role in assisting protein folding. The GroEL-GroES system forms a nano-cage that allows encapsulation of the non-native substrate proteins and provides a physical environment optimized to promote and accelerate protein folding. In Vibrio vulnificus (strain CMCP6), this protein is Chaperonin GroEL 1.